Here is a 69-residue protein sequence, read N- to C-terminus: Cytochrome c oxidase subunit 8A, mitochondrial (69 aa).

The transit peptide at 1-25 directs the protein to the mitochondrion; it reads MSVLTPLLLRGLTGSARRLPVPCAR. The SIFI-degron motif lies at 2-19; sequence SVLTPLLLRGLTGSARRL. Topologically, residues 26–36 are mitochondrial matrix; it reads VHSKPPREQLG. Residues 37-60 form a helical membrane-spanning segment; the sequence is TMDIAIGLTSCFVCFLLPSGWVLS. At 61–69 the chain is on the mitochondrial intermembrane side; that stretch reads HLENYKKRE.

Belongs to the cytochrome c oxidase VIII family. As to quaternary structure, component of the cytochrome c oxidase (complex IV, CIV), a multisubunit enzyme composed of 14 subunits. The complex is composed of a catalytic core of 3 subunits MT-CO1, MT-CO2 and MT-CO3, encoded in the mitochondrial DNA, and 11 supernumerary subunits COX4I, COX5A, COX5B, COX6A, COX6B, COX6C, COX7A, COX7B, COX7C, COX8 and NDUFA4, which are encoded in the nuclear genome. The complex exists as a monomer or a dimer and forms supercomplexes (SCs) in the inner mitochondrial membrane with NADH-ubiquinone oxidoreductase (complex I, CI) and ubiquinol-cytochrome c oxidoreductase (cytochrome b-c1 complex, complex III, CIII), resulting in different assemblies (supercomplex SCI(1)III(2)IV(1) and megacomplex MCI(2)III(2)IV(2)). In response to mitochondrial stress, the precursor protein is ubiquitinated by the SIFI complex in the cytoplasm before mitochondrial import, leading to its degradation. Within the SIFI complex, UBR4 initiates ubiquitin chain that are further elongated or branched by KCMF1.

The protein localises to the mitochondrion inner membrane. It participates in energy metabolism; oxidative phosphorylation. Functionally, component of the cytochrome c oxidase, the last enzyme in the mitochondrial electron transport chain which drives oxidative phosphorylation. The respiratory chain contains 3 multisubunit complexes succinate dehydrogenase (complex II, CII), ubiquinol-cytochrome c oxidoreductase (cytochrome b-c1 complex, complex III, CIII) and cytochrome c oxidase (complex IV, CIV), that cooperate to transfer electrons derived from NADH and succinate to molecular oxygen, creating an electrochemical gradient over the inner membrane that drives transmembrane transport and the ATP synthase. Cytochrome c oxidase is the component of the respiratory chain that catalyzes the reduction of oxygen to water. Electrons originating from reduced cytochrome c in the intermembrane space (IMS) are transferred via the dinuclear copper A center (CU(A)) of subunit 2 and heme A of subunit 1 to the active site in subunit 1, a binuclear center (BNC) formed by heme A3 and copper B (CU(B)). The BNC reduces molecular oxygen to 2 water molecules using 4 electrons from cytochrome c in the IMS and 4 protons from the mitochondrial matrix. The polypeptide is Cytochrome c oxidase subunit 8A, mitochondrial (COX8A) (Otolemur crassicaudatus (Brown greater galago)).